The sequence spans 248 residues: uncharacterized protein (248 aa).

An NADP(+)-binding site is contributed by 9–33 (IITGASSGIGKATALLLAEKGAKLV). Ser-141 serves as a coordination point for substrate. The active-site Proton acceptor is the Tyr-154.

This sequence belongs to the short-chain dehydrogenases/reductases (SDR) family.

This is an uncharacterized protein from Listeria monocytogenes serovar 1/2a (strain ATCC BAA-679 / EGD-e).